Reading from the N-terminus, the 167-residue chain is NAD(P)H-quinone oxidoreductase subunit I, chloroplastic (167 aa).

2 consecutive 4Fe-4S ferredoxin-type domains span residues 55–84 and 95–124; these read GRIHFEFDKCIACEVCVRVCPIDLPVVDWK and LNYSIDFGICIFCGNCVEYCPTNCLSMTEE. Residues C64, C67, C70, C74, C104, C107, C110, and C114 each coordinate [4Fe-4S] cluster.

It belongs to the complex I 23 kDa subunit family. As to quaternary structure, NDH is composed of at least 16 different subunits, 5 of which are encoded in the nucleus. The cofactor is [4Fe-4S] cluster.

It localises to the plastid. It is found in the chloroplast thylakoid membrane. The enzyme catalyses a plastoquinone + NADH + (n+1) H(+)(in) = a plastoquinol + NAD(+) + n H(+)(out). The catalysed reaction is a plastoquinone + NADPH + (n+1) H(+)(in) = a plastoquinol + NADP(+) + n H(+)(out). NDH shuttles electrons from NAD(P)H:plastoquinone, via FMN and iron-sulfur (Fe-S) centers, to quinones in the photosynthetic chain and possibly in a chloroplast respiratory chain. The immediate electron acceptor for the enzyme in this species is believed to be plastoquinone. Couples the redox reaction to proton translocation, and thus conserves the redox energy in a proton gradient. This Lobularia maritima (Sweet alyssum) protein is NAD(P)H-quinone oxidoreductase subunit I, chloroplastic.